The sequence spans 159 residues: NAD(P)H-quinone oxidoreductase subunit J, chloroplastic (159 aa).

The protein belongs to the complex I 30 kDa subunit family. NDH is composed of at least 16 different subunits, 5 of which are encoded in the nucleus.

The protein resides in the plastid. The protein localises to the chloroplast thylakoid membrane. The catalysed reaction is a plastoquinone + NADH + (n+1) H(+)(in) = a plastoquinol + NAD(+) + n H(+)(out). The enzyme catalyses a plastoquinone + NADPH + (n+1) H(+)(in) = a plastoquinol + NADP(+) + n H(+)(out). Its function is as follows. NDH shuttles electrons from NAD(P)H:plastoquinone, via FMN and iron-sulfur (Fe-S) centers, to quinones in the photosynthetic chain and possibly in a chloroplast respiratory chain. The immediate electron acceptor for the enzyme in this species is believed to be plastoquinone. Couples the redox reaction to proton translocation, and thus conserves the redox energy in a proton gradient. The sequence is that of NAD(P)H-quinone oxidoreductase subunit J, chloroplastic from Brachypodium distachyon (Purple false brome).